Reading from the N-terminus, the 629-residue chain is 5-aminolevulinate synthase, mitochondrial (629 aa).

A mitochondrion-targeting transit peptide spans Met1 to Ala69. Residues Arg155, Ser268, and Lys287 each coordinate substrate. Pyridoxal 5'-phosphate contacts are provided by Ser320, His348, and Thr388. The active site involves Lys391. Lys391 carries the N6-(pyridoxal phosphate)lysine modification. Residues Thr420 and Thr421 each coordinate pyridoxal 5'-phosphate. Position 506 (Thr506) interacts with substrate.

It belongs to the class-II pyridoxal-phosphate-dependent aminotransferase family. In terms of assembly, homodimer. Requires pyridoxal 5'-phosphate as cofactor.

It localises to the mitochondrion matrix. It carries out the reaction succinyl-CoA + glycine + H(+) = 5-aminolevulinate + CO2 + CoA. The protein operates within porphyrin-containing compound metabolism; protoporphyrin-IX biosynthesis; 5-aminolevulinate from glycine: step 1/1. Catalyzes the synthesis of 5-aminolevulinate (ALA) from succinyl-CoA and glycine, the first and rate-limiting step in heme biosynthesis. The polypeptide is 5-aminolevulinate synthase, mitochondrial (alv-1) (Neurospora crassa (strain ATCC 24698 / 74-OR23-1A / CBS 708.71 / DSM 1257 / FGSC 987)).